Consider the following 593-residue polypeptide: Methionine--tRNA ligase (593 aa).

The short motif at 7–17 (PYANGPRHIGH) is the 'HIGH' region element. Zn(2+) is bound by residues Cys-139, Cys-142, Cys-152, and Cys-155. Residues 343–347 (KFSTS) carry the 'KMSKS' region motif. Residue Thr-346 participates in ATP binding.

This sequence belongs to the class-I aminoacyl-tRNA synthetase family. MetG type 1 subfamily. In terms of assembly, monomer. The cofactor is Zn(2+).

It is found in the cytoplasm. It carries out the reaction tRNA(Met) + L-methionine + ATP = L-methionyl-tRNA(Met) + AMP + diphosphate. Is required not only for elongation of protein synthesis but also for the initiation of all mRNA translation through initiator tRNA(fMet) aminoacylation. In Saccharopolyspora erythraea (strain ATCC 11635 / DSM 40517 / JCM 4748 / NBRC 13426 / NCIMB 8594 / NRRL 2338), this protein is Methionine--tRNA ligase.